Reading from the N-terminus, the 122-residue chain is Holo-[acyl-carrier-protein] synthase (122 aa).

Positions 8 and 56 each coordinate Mg(2+).

This sequence belongs to the P-Pant transferase superfamily. AcpS family. Mg(2+) serves as cofactor.

It localises to the cytoplasm. The enzyme catalyses apo-[ACP] + CoA = holo-[ACP] + adenosine 3',5'-bisphosphate + H(+). Its function is as follows. Transfers the 4'-phosphopantetheine moiety from coenzyme A to a Ser of acyl-carrier-protein. The protein is Holo-[acyl-carrier-protein] synthase of Alkaliphilus metalliredigens (strain QYMF).